Consider the following 541-residue polypeptide: MGNSKPLPTISCIIVSVLYFSFYCITPTSSSASIQDQFINCVKRNTHVSFPLEKTLFTPAKNVSLFNQVLESTAQNLQFLAKSMPKPGFIFRPIHQSQVQASIICSKKLGIHFRVRSGGHDFEALSYVSRIEKPFILLDLSKLKQINVDIESNSAWVQPGATLGELYYRIAEKSKIHGFPAGLCTSVGIGGYMTGGGYGTLMRKYGLAGDNVLDVKMVDANGKLLDRAAMGEDLFWAIRGGGGASFGIVLAWKIKLVPVPKTVTVFTVTKTLEQDARLKTISKWQQISSKIIEEIHIRVVLRAAGNDGNKTVTMTYLGQFLGEKGTLLKVMEKAFPELGLTQKDCTEMSWIEAALFHGGFPTGSPIEILLQLKSPLGKDYFKATSDFVKEPIPVIGLKGIFKRLIEGNTTFLNWTPYGGMMSKIPESAIPFPHRNGTLFKILYYANWLENDKTSSRKINWIKEIYNYMAPYVSSNPRQAYVNYRDLDFGQNKNNAKVNFIEAKIWGPKYFKGNFDRLVKIKTKVDPENFFRHEQSIPPMPY.

An N-terminal signal peptide occupies residues 1 to 32 (MGNSKPLPTISCIIVSVLYFSFYCITPTSSSA). Cys41 and Cys105 are oxidised to a cystine. N-linked (GlcNAc...) asparagine glycosylation occurs at Asn62. In terms of domain architecture, FAD-binding PCMH-type spans 83–259 (SMPKPGFIFR…LAWKIKLVPV (177 aa)). Positions 120-184 (HDFEALSYVS…KIHGFPAGLC (65 aa)) form a cross-link, 6-(S-cysteinyl)-8alpha-(pros-histidyl)-FAD (His-Cys). N-linked (GlcNAc...) asparagine glycosylation is found at Asn309, Asn408, and Asn435.

Belongs to the oxygen-dependent FAD-linked oxidoreductase family. FAD is required as a cofactor. In terms of processing, the FAD cofactor is bound via a bicovalent 6-S-cysteinyl, 8alpha-N1-histidyl FAD linkage.

The protein localises to the secreted. It localises to the cell wall. In Arabidopsis thaliana (Mouse-ear cress), this protein is Berberine bridge enzyme-like 24.